A 995-amino-acid chain; its full sequence is Serine-aspartate repeat-containing protein C (995 aa).

A signal peptide spans 1–50 (MNNKKTATNRKGMIPNRLNKFSIRKYSVGTASILVGTTLIFGLSGHEAKA). The YSIRK-G/S signaling motif motif lies at 21 to 32 (FSIRKYSVGTAS). Positions 51–164 (AEHTNGELNQ…STTPKTTTIK (114 aa)) are disordered. The segment at 51-495 (AEHTNGELNQ…GSSTANGDQK (445 aa)) is ligand binding A region. The span at 56 to 71 (GELNQSKNETTAPSEN) shows a compositional bias: polar residues. Positions 72–83 (KTTKKVDSRQLK) are enriched in basic and acidic residues. Over residues 84–155 (DNTQTATADQ…SNLTQAKDVS (72 aa)) the composition is skewed to polar residues. CNA-B domains lie at 496-606 (KYNL…YKTP) and 607-717 (KYSL…EEET). Positions 678-975 (TQTGTNTTED…NNSNNGTLFG (298 aa)) are disordered. 2 stretches are compositionally biased toward acidic residues: residues 685 to 695 (TEDDKDADGGE) and 712 to 934 (YYEE…DSDS). The LPXTG sorting signal signature appears at 958–962 (LPETG). Residues 960-975 (ETGSENNNSNNGTLFG) show a composition bias toward low complexity. Threonine 961 bears the Pentaglycyl murein peptidoglycan amidated threonine mark. A propeptide spans 962-995 (GSENNNSNNGTLFGGLFAALGSLLLFGRRKKQNK) (removed by sortase).

It belongs to the serine-aspartate repeat-containing protein (SDr) family. Homodimerizes; via N2-Domain. Interacts with host NRXN1; this interaction mediates bacterial attachment to host cells.

It localises to the secreted. Its subcellular location is the cell wall. Its function is as follows. Cell surface-associated calcium-binding protein which plays an important role in adhesion and pathogenesis. Mediates interactions with components of the extracellular matrix such as host NRXN1 to promote bacterial adhesion. This is Serine-aspartate repeat-containing protein C (sdrC) from Staphylococcus aureus (strain NCTC 8325 / PS 47).